A 202-amino-acid polypeptide reads, in one-letter code: Snake venom metalloproteinase TM-1 (202 aa).

Residue Gln1 is modified to Pyrrolidone carboxylic acid. One can recognise a Peptidase M12B domain in the interval 7-202; sequence RYVMLAIVAD…TNPQCILNAP (196 aa). 3 cysteine pairs are disulfide-bonded: Cys118–Cys197, Cys159–Cys181, and Cys161–Cys164. His143 is a Zn(2+) binding site. Glu144 is a catalytic residue. Residues His147 and His153 each contribute to the Zn(2+) site.

The protein belongs to the venom metalloproteinase (M12B) family. P-I subfamily. Monomer. Zn(2+) serves as cofactor. The N-terminus is blocked. In terms of processing, not glycosylated. Expressed by the venom gland.

The protein localises to the secreted. Its activity is regulated as follows. Inhibited by EDTA and 1,10-phenanthroline. Is also inhibited by endogenous tripeptide inhibitors pyroGlu-Asn-Trp, pyroGlu-Gln-Trp, and pyroGlu-Lys-Trp. Potent fibrinogenolytic protease which cleaves mainly the Aalpha (FGA) and Bbeta (FGB) chains of fibrinogen and slightly the gamma chain (FGG). Shows preference for substrates having a moderate-size and hydrophobic residue at the P1' position. Preferentially cleaves Ala-|-Leu and Tyr-|-Leu bonds. Is more susceptible to tripeptide inhibitors than TM-3 (AC O57413). In Protobothrops mucrosquamatus (Taiwan habu), this protein is Snake venom metalloproteinase TM-1.